Here is a 488-residue protein sequence, read N- to C-terminus: Cobyric acid synthase (488 aa).

One can recognise a GATase cobBQ-type domain in the interval 252–442; sequence RTRICVPILP…VHGLFASDAF (191 aa). C334 (nucleophile) is an active-site residue. H434 is a catalytic residue.

It belongs to the CobB/CobQ family. CobQ subfamily.

The protein operates within cofactor biosynthesis; adenosylcobalamin biosynthesis. Functionally, catalyzes amidations at positions B, D, E, and G on adenosylcobyrinic A,C-diamide. NH(2) groups are provided by glutamine, and one molecule of ATP is hydrogenolyzed for each amidation. This chain is Cobyric acid synthase, found in Xanthobacter autotrophicus (strain ATCC BAA-1158 / Py2).